The chain runs to 447 residues: D-ribitol-5-phosphate cytidylyltransferase (447 aa).

The protein belongs to the IspD/TarI cytidylyltransferase family. IspD subfamily. In terms of assembly, homodimer.

It localises to the cytoplasm. The protein localises to the cytosol. The catalysed reaction is D-ribitol 5-phosphate + CTP + H(+) = CDP-L-ribitol + diphosphate. It carries out the reaction D-ribose 5-phosphate + CTP + H(+) = CDP-D-ribose + diphosphate. The enzyme catalyses D-ribulose 5-phosphate + CTP + H(+) = CDP-D-ribulose + diphosphate. Its pathway is protein modification; protein glycosylation. Cytidylyltransferase required for protein O-linked mannosylation. Catalyzes the formation of CDP-ribitol nucleotide sugar from D-ribitol 5-phosphate. CDP-ribitol is a substrate of FKTN during the biosynthesis of the phosphorylated O-mannosyl trisaccharide (N-acetylgalactosamine-beta-3-N-acetylglucosamine-beta-4-(phosphate-6-)mannose), a carbohydrate structure present in alpha-dystroglycan (DAG1), which is required for binding laminin G-like domain-containing extracellular proteins with high affinity. Shows activity toward other pentose phosphate sugars and mediates formation of CDP-ribulose or CDP-ribose using CTP and ribulose-5-phosphate or ribose-5-phosphate, respectively. Not involved in dolichol production. The sequence is that of D-ribitol-5-phosphate cytidylyltransferase (Crppa) from Mus musculus (Mouse).